A 420-amino-acid polypeptide reads, in one-letter code: MSNVRYISNLTRETYALILAGGRGSRLHELTDWRAKPALYFGGKFRIIDFPLSNCINSGIRRVGVVTQYKSHSLIRHVMRGWGHFKKELGESVEILPASQRYSENWYQGTADAVFQNIDIIRHELPKYVMVLSGDHVYRMDYAGLLAAHAESGADMTVSCLEVPVAEAAGAFGVMEVDDEMRILGFEEKPKHPKHSPGNPEKCLASMGNYVFNTEFLFDQLKKDAQNANSDRDFGKDIIPSIIEKHKVFAYPFKSAFPNEQAYWRDVGTLDSFWQANMELLSPTPALNLYDAKWPIWTYQEQLPPAKFVFDDDDRRGMAVDSIISGGCIISGATVRRSVLFNEVRVCSYSVVEDSVVLPDVVVLRHCKIKNAIIDRGCIIPEGTVIGYNHDHDRAKGFRVSEKGITLVTRDMLGLPVGYE.

Residues tyrosine 107, glycine 173, 188–189, and serine 206 each bind alpha-D-glucose 1-phosphate; that span reads EK.

This sequence belongs to the bacterial/plant glucose-1-phosphate adenylyltransferase family. In terms of assembly, homotetramer.

It catalyses the reaction alpha-D-glucose 1-phosphate + ATP + H(+) = ADP-alpha-D-glucose + diphosphate. Its pathway is glycan biosynthesis; glycogen biosynthesis. Functionally, involved in the biosynthesis of ADP-glucose, a building block required for the elongation reactions to produce glycogen. Catalyzes the reaction between ATP and alpha-D-glucose 1-phosphate (G1P) to produce pyrophosphate and ADP-Glc. This is Glucose-1-phosphate adenylyltransferase from Shewanella sp. (strain MR-4).